The chain runs to 291 residues: Pantothenate synthetase 1 (291 aa).

Histidine 37 serves as the catalytic Proton donor. 147–150 (GEKD) provides a ligand contact to ATP. Glutamine 153 serves as a coordination point for (R)-pantoate. An ATP-binding site is contributed by 184-187 (ISSR).

This sequence belongs to the pantothenate synthetase family. As to quaternary structure, homodimer.

The protein resides in the cytoplasm. It catalyses the reaction (R)-pantoate + beta-alanine + ATP = (R)-pantothenate + AMP + diphosphate + H(+). It functions in the pathway cofactor biosynthesis; (R)-pantothenate biosynthesis; (R)-pantothenate from (R)-pantoate and beta-alanine: step 1/1. Its function is as follows. Catalyzes the condensation of pantoate with beta-alanine in an ATP-dependent reaction via a pantoyl-adenylate intermediate. The sequence is that of Pantothenate synthetase 1 from Frankia alni (strain DSM 45986 / CECT 9034 / ACN14a).